The following is a 198-amino-acid chain: Superoxide dismutase [Mn], mitochondrial (198 aa).

Residue His-26 coordinates Mn(2+). 3'-nitrotyrosine is present on Tyr-34. An N6-acetyllysine; alternate mark is found at Lys-44 and Lys-51. N6-succinyllysine; alternate is present on residues Lys-44 and Lys-51. His-74 contributes to the Mn(2+) binding site. Lys-90 carries the N6-acetyllysine modification. N6-acetyllysine; alternate is present on residues Lys-98 and Lys-106. 2 positions are modified to N6-succinyllysine; alternate: Lys-98 and Lys-106. Asp-159 and His-163 together coordinate Mn(2+). Lys-178 carries the N6-acetyllysine modification.

It belongs to the iron/manganese superoxide dismutase family. As to quaternary structure, homotetramer. Mn(2+) is required as a cofactor. Nitrated under oxidative stress. Nitration coupled with oxidation inhibits the catalytic activity. In terms of processing, acetylation at Lys-98 decreases enzymatic activity. Deacetylated by SIRT3 upon exposure to ionizing radiations or after long fasting. Post-translationally, polyubiquitinated; leading to proteasomal degradation. Deubiquitinated by USP36 which increases protein stability.

The protein localises to the mitochondrion matrix. It catalyses the reaction 2 superoxide + 2 H(+) = H2O2 + O2. Destroys superoxide anion radicals which are normally produced within the cells and which are toxic to biological systems. This chain is Superoxide dismutase [Mn], mitochondrial (SOD2), found in Macaca fuscata fuscata (Japanese macaque).